Consider the following 101-residue polypeptide: NAD(P)H-quinone oxidoreductase subunit 4L, chloroplastic (101 aa).

3 consecutive transmembrane segments (helical) span residues 2-22 (MLEH…YGLI), 32-52 (MCLE…SDFF), and 61-81 (IFSI…LAIV).

This sequence belongs to the complex I subunit 4L family. As to quaternary structure, NDH is composed of at least 16 different subunits, 5 of which are encoded in the nucleus.

The protein resides in the plastid. It localises to the chloroplast thylakoid membrane. The catalysed reaction is a plastoquinone + NADH + (n+1) H(+)(in) = a plastoquinol + NAD(+) + n H(+)(out). The enzyme catalyses a plastoquinone + NADPH + (n+1) H(+)(in) = a plastoquinol + NADP(+) + n H(+)(out). In terms of biological role, NDH shuttles electrons from NAD(P)H:plastoquinone, via FMN and iron-sulfur (Fe-S) centers, to quinones in the photosynthetic chain and possibly in a chloroplast respiratory chain. The immediate electron acceptor for the enzyme in this species is believed to be plastoquinone. Couples the redox reaction to proton translocation, and thus conserves the redox energy in a proton gradient. The chain is NAD(P)H-quinone oxidoreductase subunit 4L, chloroplastic from Guizotia abyssinica (Niger).